Consider the following 487-residue polypeptide: N-succinylglutamate 5-semialdehyde dehydrogenase (487 aa).

221–226 provides a ligand contact to NAD(+); sequence GSSDTG. Residues E244 and C278 contribute to the active site.

This sequence belongs to the aldehyde dehydrogenase family. AstD subfamily.

The catalysed reaction is N-succinyl-L-glutamate 5-semialdehyde + NAD(+) + H2O = N-succinyl-L-glutamate + NADH + 2 H(+). It functions in the pathway amino-acid degradation; L-arginine degradation via AST pathway; L-glutamate and succinate from L-arginine: step 4/5. In terms of biological role, catalyzes the NAD-dependent reduction of succinylglutamate semialdehyde into succinylglutamate. This Burkholderia mallei (strain ATCC 23344) protein is N-succinylglutamate 5-semialdehyde dehydrogenase.